Reading from the N-terminus, the 257-residue chain is Hydroxyacylglutathione hydrolase (257 aa).

Zn(2+) contacts are provided by His-54, His-56, Asp-58, His-59, His-110, Asp-131, and His-169.

Belongs to the metallo-beta-lactamase superfamily. Glyoxalase II family. Monomer. Requires Zn(2+) as cofactor.

It carries out the reaction an S-(2-hydroxyacyl)glutathione + H2O = a 2-hydroxy carboxylate + glutathione + H(+). It functions in the pathway secondary metabolite metabolism; methylglyoxal degradation; (R)-lactate from methylglyoxal: step 2/2. Its function is as follows. Thiolesterase that catalyzes the hydrolysis of S-D-lactoyl-glutathione to form glutathione and D-lactic acid. The chain is Hydroxyacylglutathione hydrolase from Hahella chejuensis (strain KCTC 2396).